Consider the following 352-residue polypeptide: Histidinol-phosphate aminotransferase (352 aa).

Position 208 is an N6-(pyridoxal phosphate)lysine (K208).

This sequence belongs to the class-II pyridoxal-phosphate-dependent aminotransferase family. Histidinol-phosphate aminotransferase subfamily. Homodimer. Pyridoxal 5'-phosphate serves as cofactor.

It carries out the reaction L-histidinol phosphate + 2-oxoglutarate = 3-(imidazol-4-yl)-2-oxopropyl phosphate + L-glutamate. It participates in amino-acid biosynthesis; L-histidine biosynthesis; L-histidine from 5-phospho-alpha-D-ribose 1-diphosphate: step 7/9. The protein is Histidinol-phosphate aminotransferase of Streptococcus sanguinis (strain SK36).